Reading from the N-terminus, the 246-residue chain is Ribonuclease PH (246 aa).

Phosphate-binding positions include R91 and 129 to 131 (GTR).

The protein belongs to the RNase PH family. Homohexameric ring arranged as a trimer of dimers.

It catalyses the reaction tRNA(n+1) + phosphate = tRNA(n) + a ribonucleoside 5'-diphosphate. Its function is as follows. Phosphorolytic 3'-5' exoribonuclease that plays an important role in tRNA 3'-end maturation. Removes nucleotide residues following the 3'-CCA terminus of tRNAs; can also add nucleotides to the ends of RNA molecules by using nucleoside diphosphates as substrates, but this may not be physiologically important. Probably plays a role in initiation of 16S rRNA degradation (leading to ribosome degradation) during starvation. The sequence is that of Ribonuclease PH from Paraburkholderia xenovorans (strain LB400).